We begin with the raw amino-acid sequence, 688 residues long: Polyribonucleotide nucleotidyltransferase (688 aa).

Mg(2+)-binding residues include D484 and D490. The 60-residue stretch at 550 to 609 (PQTEIFNVAPDKIIEIIGQGGRVIKEIVEKFEVKIDLNTPSGEVKIMGNKERVLKTKEFI) folds into the KH domain. An S1 motif domain is found at 626–688 (DEVLEAQVKR…NKGKIALDLA (63 aa)).

Belongs to the polyribonucleotide nucleotidyltransferase family. Requires Mg(2+) as cofactor.

It is found in the cytoplasm. The enzyme catalyses RNA(n+1) + phosphate = RNA(n) + a ribonucleoside 5'-diphosphate. Its function is as follows. Involved in mRNA degradation. Catalyzes the phosphorolysis of single-stranded polyribonucleotides processively in the 3'- to 5'-direction. This chain is Polyribonucleotide nucleotidyltransferase, found in Helicobacter pylori (strain J99 / ATCC 700824) (Campylobacter pylori J99).